The primary structure comprises 152 residues: Putative polyketide cyclase (152 aa).

To polyketide cyclases.

It functions in the pathway antibiotic biosynthesis; curamycin biosynthesis. This is Putative polyketide cyclase (curF) from Streptomyces cyaneus (Streptomyces curacoi).